Reading from the N-terminus, the 540-residue chain is Glucose-6-phosphate isomerase (540 aa).

Catalysis depends on E351, which acts as the Proton donor. Active-site residues include H382 and K506.

It belongs to the GPI family.

Its subcellular location is the cytoplasm. The enzyme catalyses alpha-D-glucose 6-phosphate = beta-D-fructose 6-phosphate. It participates in carbohydrate biosynthesis; gluconeogenesis. The protein operates within carbohydrate degradation; glycolysis; D-glyceraldehyde 3-phosphate and glycerone phosphate from D-glucose: step 2/4. In terms of biological role, catalyzes the reversible isomerization of glucose-6-phosphate to fructose-6-phosphate. In Corynebacterium glutamicum (strain R), this protein is Glucose-6-phosphate isomerase.